The primary structure comprises 323 residues: Di/tripeptide transport ATP-binding protein DppF (323 aa).

Residues 5-254 (LTARDLTRHY…PLHPYTRALL (250 aa)) form the ABC transporter domain. An ATP-binding site is contributed by 47–54 (GESGCGKS).

The protein belongs to the ABC transporter superfamily. As to quaternary structure, the complex is composed of two ATP-binding proteins (DppD and DppF), two transmembrane proteins (DppB and DppC) and a solute-binding protein (DppA1-A5). Five orthologous SBPs (DppA1-A5) are present in P.aeruginosa, which increases the substrate specificity of the DppBCDF transporter.

It localises to the cell inner membrane. The enzyme catalyses a dipeptide(out) + ATP + H2O = a dipeptide(in) + ADP + phosphate + H(+). In terms of biological role, part of the ABC transporter DppABCDF involved in the uptake of various di/tripeptides. Is also involved in the uptake of phaseolotoxin, a toxic tripeptide inhibiting the enzyme ornithine carbamoyltransferase. Responsible for energy coupling to the transport system. In Pseudomonas aeruginosa (strain UCBPP-PA14), this protein is Di/tripeptide transport ATP-binding protein DppF.